The sequence spans 289 residues: Acetyl-coenzyme A carboxylase carboxyl transferase subunit beta (289 aa).

The CoA carboxyltransferase N-terminal domain maps to 28–289; sequence VMTKCPKCKK…QGGEMAVWQS (262 aa). Residues Cys32, Cys35, Cys51, and Cys54 each contribute to the Zn(2+) site. The C4-type zinc finger occupies 32-54; sequence CPKCKKIMYTKELLKNLKVCVNC.

The protein belongs to the AccD/PCCB family. As to quaternary structure, acetyl-CoA carboxylase is a heterohexamer composed of biotin carboxyl carrier protein (AccB), biotin carboxylase (AccC) and two subunits each of ACCase subunit alpha (AccA) and ACCase subunit beta (AccD). Zn(2+) serves as cofactor.

Its subcellular location is the cytoplasm. The enzyme catalyses N(6)-carboxybiotinyl-L-lysyl-[protein] + acetyl-CoA = N(6)-biotinyl-L-lysyl-[protein] + malonyl-CoA. Its pathway is lipid metabolism; malonyl-CoA biosynthesis; malonyl-CoA from acetyl-CoA: step 1/1. Functionally, component of the acetyl coenzyme A carboxylase (ACC) complex. Biotin carboxylase (BC) catalyzes the carboxylation of biotin on its carrier protein (BCCP) and then the CO(2) group is transferred by the transcarboxylase to acetyl-CoA to form malonyl-CoA. This is Acetyl-coenzyme A carboxylase carboxyl transferase subunit beta from Bacillus cereus (strain AH187).